We begin with the raw amino-acid sequence, 149 residues long: UPF0251 protein Moth_1655 (149 aa).

Residues 129 to 149 (AGRGPGRGRCHRHGRFGEGEH) are disordered.

This sequence belongs to the UPF0251 family.

In Moorella thermoacetica (strain ATCC 39073 / JCM 9320), this protein is UPF0251 protein Moth_1655.